The chain runs to 188 residues: Peptidyl-tRNA hydrolase (188 aa).

Y15 contributes to the tRNA binding site. H20 functions as the Proton acceptor in the catalytic mechanism. Residues F66, N68, and N114 each coordinate tRNA.

This sequence belongs to the PTH family. In terms of assembly, monomer.

It is found in the cytoplasm. It carries out the reaction an N-acyl-L-alpha-aminoacyl-tRNA + H2O = an N-acyl-L-amino acid + a tRNA + H(+). Functionally, hydrolyzes ribosome-free peptidyl-tRNAs (with 1 or more amino acids incorporated), which drop off the ribosome during protein synthesis, or as a result of ribosome stalling. Its function is as follows. Catalyzes the release of premature peptidyl moieties from peptidyl-tRNA molecules trapped in stalled 50S ribosomal subunits, and thus maintains levels of free tRNAs and 50S ribosomes. In Lactococcus lactis subsp. cremoris (strain MG1363), this protein is Peptidyl-tRNA hydrolase.